The primary structure comprises 354 residues: Sorbitol dehydrogenase (354 aa).

C43 lines the Zn(2+) pocket. Y49 provides a ligand contact to substrate. Zn(2+) contacts are provided by H67 and E68. E153 is a binding site for substrate. I181, D201, and R206 together coordinate NAD(+). 2 positions are modified to phosphoserine: S208 and S222. NAD(+) contacts are provided by residues 270–272 (VGL) and 294–296 (VFR). Positions 296 and 297 each coordinate substrate.

It belongs to the zinc-containing alcohol dehydrogenase family. As to quaternary structure, homotetramer. Zn(2+) is required as a cofactor. Expressed in liver.

The protein resides in the mitochondrion membrane. The protein localises to the cell projection. Its subcellular location is the cilium. It is found in the flagellum. It catalyses the reaction xylitol + NAD(+) = D-xylulose + NADH + H(+). The enzyme catalyses L-iditol + NAD(+) = keto-L-sorbose + NADH + H(+). The catalysed reaction is keto-D-fructose + NADH + H(+) = D-sorbitol + NAD(+). Functionally, polyol dehydrogenase that catalyzes the reversible NAD(+)-dependent oxidation of various sugar alcohols. Is mostly active with xylitol, L-iditol and D-sorbitol (D-glucitol) as substrates, leading to the C2-oxidized products D-xylulose, L-sorbose and D-fructose, respectively. Is a key enzyme in the polyol pathway that interconverts glucose and fructose via sorbitol, which constitutes an important alternate route for glucose metabolism. May play a role in sperm motility by using sorbitol as an alternative energy source for sperm motility. The chain is Sorbitol dehydrogenase (SORD) from Ovis aries (Sheep).